A 114-amino-acid polypeptide reads, in one-letter code: MDLKFRCLIKNVADGRAGEIIVEECLEIIEQKYLRLMTIDLKEIRSSMFDQESNPWVYVFGKIYISGLMGRAIGKRMVKRGTYRIKEGELINHFEGVHIHFYKDIEKIFHSIRV.

This is Protein gamma (gamma) from Bovine ephemeral fever virus (strain BB7721) (BEFV).